A 698-amino-acid chain; its full sequence is eEF1A lysine and N-terminal methyltransferase (698 aa).

Methionine 1 carries the post-translational modification N-acetylmethionine. A Phosphoserine modification is found at serine 267. The disordered stretch occupies residues 431–461 (KDTSHRAQKKRKKDRKKQRPADTSEDFPPAP). Residues 436–448 (RAQKKRKKDRKKQ) show a composition bias toward basic residues.

The protein belongs to the methyltransferase superfamily. Forms a tripartite complex containing GAB1, METTL13 and SPRY2. Within the complex interacts with GAB1 and SPRY2. In terms of tissue distribution, expressed in the inner ear (at protein level). Expression is detected in the cochlear duct, spiral limbus region, efferent and afferent nerves, and in spiral ganglion neurons (at protein level).

The protein resides in the cytoplasm. Its subcellular location is the nucleus. The protein localises to the mitochondrion. It carries out the reaction L-lysyl-[protein] + S-adenosyl-L-methionine = N(6)-methyl-L-lysyl-[protein] + S-adenosyl-L-homocysteine + H(+). It catalyses the reaction N(6)-methyl-L-lysyl-[protein] + S-adenosyl-L-methionine = N(6),N(6)-dimethyl-L-lysyl-[protein] + S-adenosyl-L-homocysteine + H(+). The enzyme catalyses N-terminal glycyl-L-lysyl-L-glutamyl-[protein] + 3 S-adenosyl-L-methionine = N-terminal N,N,N-trimethyl-glycyl-L-lysyl-L-glutamyl-[protein] + 3 S-adenosyl-L-homocysteine + 3 H(+). Dual methyltransferase that catalyzes methylation of elongation factor 1-alpha (EEF1A1 and EEF1A2) at two different positions, and is therefore involved in the regulation of mRNA translation. Via its C-terminus, methylates EEF1A1 and EEF1A2 at the N-terminal residue 'Gly-2'. Via its N-terminus dimethylates EEF1A1 and EEF1A2 at residue 'Lys-55'. Has no activity towards core histones H2A, H2B, H3 and H4. This chain is eEF1A lysine and N-terminal methyltransferase, found in Mus musculus (Mouse).